The primary structure comprises 914 residues: Thyroid peroxidase (914 aa).

The first 31 residues, 1 to 31 (MRTLGAMAVMLVVMGTAIFLPFLLRSRDILG), serve as a signal peptide directing secretion. At 32–834 (GKTMTSHVIS…TCIDSGRLPR (803 aa)) the chain is on the extracellular side. N-linked (GlcNAc...) asparagine glycosylation is present at N123. C136 and C152 are oxidised to a cystine. Heme b is bound at residue D232. The active-site Proton acceptor is the H233. D234 is a Ca(2+) binding site. 2 disulfide bridges follow: C253-C263 and C257-C278. N-linked (GlcNAc...) asparagine glycans are attached at residues N271 and N299. Ca(2+) contacts are provided by T313, F315, D317, and S319. N334 carries N-linked (GlcNAc...) asparagine glycosylation. Residues E387 and H482 each contribute to the heme b site. Intrachain disulfides connect C586/C643, C684/C709, C730/C770, C756/C782, C788/C802, C796/C811, and C813/C826. A glycan (N-linked (GlcNAc...) asparagine) is linked at N603. Positions 728–783 (DKCVFPEKVDNGNFVHCEESGKLVLVYSCFHGYKLQGQEQVTCTQNGWDSEPPVCK) constitute a Sushi domain. The EGF-like; calcium-binding domain occupies 784–827 (DVNECADLTHPPCHSSAKCKNTKGSFQCVCTDPYMLGEDEKTCI). Residues 835-859 (ASWVSIALGALLIGGLASLSWTVIC) form a helical membrane-spanning segment. Topologically, residues 860-914 (RWTHADKKSTLLITERVTMESGFRKSQESGISPQKAEVQDAEQEPAYGSRVLLCE) are cytoplasmic. Residues 882-907 (FRKSQESGISPQKAEVQDAEQEPAYG) form a disordered region.

Belongs to the peroxidase family. XPO subfamily. As to quaternary structure, interacts with DUOX1, DUOX2 and CYBA. Ca(2+) serves as cofactor. Requires heme b as cofactor. Heme is covalently bound through a H(2)O(2)-dependent autocatalytic process. Heme insertion is important for the delivery of protein at the cell surface. Post-translationally, cleaved in its N-terminal part.

Its subcellular location is the membrane. The catalysed reaction is 2 iodide + H2O2 + 2 H(+) = diiodine + 2 H2O. It catalyses the reaction [thyroglobulin]-L-tyrosine + iodide + H2O2 + H(+) = [thyroglobulin]-3-iodo-L-tyrosine + 2 H2O. It carries out the reaction [thyroglobulin]-3-iodo-L-tyrosine + iodide + H2O2 + H(+) = [thyroglobulin]-3,5-diiodo-L-tyrosine + 2 H2O. The enzyme catalyses 2 [thyroglobulin]-3,5-diiodo-L-tyrosine + H2O2 = [thyroglobulin]-L-thyroxine + [thyroglobulin]-dehydroalanine + 2 H2O. The catalysed reaction is [thyroglobulin]-3-iodo-L-tyrosine + [thyroglobulin]-3,5-diiodo-L-tyrosine + H2O2 = [thyroglobulin]-3,3',5-triiodo-L-thyronine + [thyroglobulin]-dehydroalanine + 2 H2O. It participates in hormone biosynthesis; thyroid hormone biosynthesis. Iodination and coupling of the hormonogenic tyrosines in thyroglobulin to yield the thyroid hormones T(3) and T(4). This is Thyroid peroxidase (Tpo) from Rattus norvegicus (Rat).